Here is a 168-residue protein sequence, read N- to C-terminus: DOMON domain-containing protein Y73F4A.2 (168 aa).

Residues 1 to 18 (MFRSIAVLSALLFAFASA) form the signal peptide. In terms of domain architecture, DOMON spans 26-143 (SDFEVYWRFA…CQKWRFVKSG (118 aa)). A glycan (N-linked (GlcNAc...) asparagine) is linked at asparagine 36. The tract at residues 148–168 (GQLTRNDKSPKEKKVCPMECN) is disordered. The segment covering 152–168 (RNDKSPKEKKVCPMECN) has biased composition (basic and acidic residues).

It is found in the secreted. This Caenorhabditis elegans protein is DOMON domain-containing protein Y73F4A.2.